The primary structure comprises 491 residues: (S)-canadine synthase (491 aa).

The helical transmembrane segment at 6 to 26 threads the bilayer; the sequence is LLVCATVAIVFATTTIIRILF. Residue Cys-434 coordinates heme.

This sequence belongs to the cytochrome P450 family. It depends on heme as a cofactor. In terms of tissue distribution, expressed at low levels in roots.

It localises to the endoplasmic reticulum membrane. It is found in the microsome membrane. It carries out the reaction (S)-tetrahydrocolumbamine + reduced [NADPH--hemoprotein reductase] + O2 = (S)-canadine + oxidized [NADPH--hemoprotein reductase] + 2 H2O + H(+). Involved in the last but one step of the biosynthesis of berberine, an antimicrobial benzylisoquinoline alkaloid. Converts (S)-tetrahydrocolumbamine (THC) to (S)-tetrahydroberberine (THB) also called (S)-canadine. This is (S)-canadine synthase (CYP719A1) from Coptis japonica (Japanese goldthread).